The chain runs to 93 residues: Large ribosomal subunit protein uL23cz/uL23cy (93 aa).

It belongs to the universal ribosomal protein uL23 family. In terms of assembly, part of the 50S ribosomal subunit.

Its subcellular location is the plastid. It localises to the chloroplast. In terms of biological role, binds to 23S rRNA. The protein is Large ribosomal subunit protein uL23cz/uL23cy (rpl23-A) of Phaseolus angularis (Azuki bean).